The sequence spans 119 residues: MICOS complex subunit MIC13 (119 aa).

At 1 to 7 (MVARVWS) the chain is on the mitochondrial matrix side. The helical transmembrane segment at 8 to 26 (LMRFLIKGSVAGGAVYLVY) threads the bilayer. At 27–119 (DQELLGPSDK…GWEYLKEHSK (93 aa)) the chain is on the mitochondrial intermembrane side.

This sequence belongs to the MICOS complex subunit Mic13 family. Component of the mitochondrial contact site and cristae organizing system (MICOS) complex, composed of at least MICOS10/MIC10, CHCHD3/MIC19, CHCHD6/MIC25, APOO/MIC26, MICOS13/MIC13, APOOL/MIC27 and IMMT/MIC60. The MICOS complex associates with mitochondrial outer membrane proteins SAMM50, MTX1 and MTX2 (together described as components of the mitochondrial outer membrane sorting assembly machinery (SAM) complex) and DNAJC11, mitochondrial inner membrane protein TMEM11 and with HSPA9. The MICOS and SAM complexes together with DNAJC11 are part of a large protein complex spanning both membranes termed the mitochondrial intermembrane space bridging (MIB) complex.

The protein localises to the mitochondrion inner membrane. Functionally, component of the MICOS complex, a large protein complex of the mitochondrial inner membrane that plays crucial roles in the maintenance of crista junctions, inner membrane architecture, and formation of contact sites to the outer membrane. Constituent of mature MICOS complex, it is required for the formation of cristae junction (CJ) and maintenance of cristae morphology. Required for the incorporation of MICOS10/MIC10 into the MICOS complex. This is MICOS complex subunit MIC13 (Micos13) from Mus musculus (Mouse).